A 161-amino-acid chain; its full sequence is Allophycocyanin subunit alpha-B (161 aa).

An N4-methylasparagine modification is found at N71. C81 is a binding site for (2R,3E)-phycocyanobilin.

The protein belongs to the phycobiliprotein family. As to quaternary structure, heterodimer of an alpha-B and a beta chain forming AP-B. In terms of processing, contains one covalently linked bilin chromophore. The chromophore is added by phycocyanobilin lyase CpcUS.

It localises to the cellular thylakoid membrane. Functionally, a variant alpha-allophycocyanin (AP) which forms a complex with beta-AP with maximum absorption at approximately 670 nanometers. It is an important phycobilisome terminal emitter involved in energy transfer to photosystem I. The polypeptide is Allophycocyanin subunit alpha-B (apcD) (Picosynechococcus sp. (strain ATCC 27264 / PCC 7002 / PR-6) (Agmenellum quadruplicatum)).